The chain runs to 331 residues: MKEYIERVTDGDDLTQAEARAVATTVFEDATEAQIGALLTALRAKGETEAEIAGFAEGMRDAARTIRPDREGLVDTCGTGGDDYNTINVSTTSAIVAAGAGVPIAKHGNYSVSSSSGSADVLEEVGVDIEAEPPDVEETIERDGIGFMLAPVFHPAMKAVIGPRQELGMRTVFNILGPLTNPADADAQVLGVYDPDLVPVMAEALARLDVERALVVHGDGLDEIAIHGETVVAEVTDDRIAEYTITPEDMGLETRDIEAISGGSPEENAADLRGIVTGDVTGAKRDIILANAGAAIYVAGVADTHEAGVEQARQAIESGAAADKLDDLIGA.

5-phospho-alpha-D-ribose 1-diphosphate contacts are provided by residues glycine 78, glycine 81–aspartate 82, threonine 86, asparagine 88–threonine 91, lysine 106–serine 114, and serine 118. Residue glycine 78 coordinates anthranilate. Residue serine 90 coordinates Mg(2+). Residue asparagine 109 coordinates anthranilate. Arginine 164 contributes to the anthranilate binding site. Residues aspartate 222 and glutamate 223 each contribute to the Mg(2+) site.

The protein belongs to the anthranilate phosphoribosyltransferase family. As to quaternary structure, homodimer. It depends on Mg(2+) as a cofactor.

It catalyses the reaction N-(5-phospho-beta-D-ribosyl)anthranilate + diphosphate = 5-phospho-alpha-D-ribose 1-diphosphate + anthranilate. Its pathway is amino-acid biosynthesis; L-tryptophan biosynthesis; L-tryptophan from chorismate: step 2/5. Its function is as follows. Catalyzes the transfer of the phosphoribosyl group of 5-phosphorylribose-1-pyrophosphate (PRPP) to anthranilate to yield N-(5'-phosphoribosyl)-anthranilate (PRA). This Haloarcula marismortui (strain ATCC 43049 / DSM 3752 / JCM 8966 / VKM B-1809) (Halobacterium marismortui) protein is Anthranilate phosphoribosyltransferase.